A 114-amino-acid chain; its full sequence is Small ribosomal subunit protein bS6 (114 aa).

Belongs to the bacterial ribosomal protein bS6 family.

Binds together with bS18 to 16S ribosomal RNA. This Thermosynechococcus vestitus (strain NIES-2133 / IAM M-273 / BP-1) protein is Small ribosomal subunit protein bS6.